A 175-amino-acid chain; its full sequence is Auxin-responsive protein IAA28 (175 aa).

A disordered region spans residues 1–39 (MEEEKRLELRLAPPCHQFTSNNNINGSKQKSSTKETSFL). Positions 7–11 (LELRL) match the EAR-like (transcriptional repression) motif. Polar residues predominate over residues 17–39 (QFTSNNNINGSKQKSSTKETSFL). In terms of domain architecture, PB1 spans 80-161 (ELYVKINMEG…TVKRLHVLKT (82 aa)).

Belongs to the Aux/IAA family. Homodimers and heterodimers. Interacts with TPL. As to expression, in roots and inflorescence stems.

It localises to the nucleus. Aux/IAA proteins are short-lived transcriptional factors that function as repressors of early auxin response genes at low auxin concentrations. Repression is thought to result from the interaction with auxin response factors (ARFs), proteins that bind to the auxin-responsive promoter element (AuxRE). Formation of heterodimers with ARF proteins may alter their ability to modulate early auxin response genes expression. The polypeptide is Auxin-responsive protein IAA28 (IAA28) (Arabidopsis thaliana (Mouse-ear cress)).